The sequence spans 430 residues: MTSVVVIGTQWGDEGKGKITDFLSQDAEVIARYQGGDNAGHTIVIDGKKFKLHLIPSGVFFPEKISVIGNGVVVNPKSLVKELEYLHTEGVSTENLRISDRAHVILPYHIKLDQLQEAAKGDNKIGTTNKGIGPAYMDKAARVGIRIADLLDKEIFASRLKTNLAEKNRLFSKMYESEELSFDEIFEEYYAYGQQIKQYVTDTSVILNDALDAGKRVLFEGAQGVMLDIDQGTYPFVTSSNPVAGGVTIGSGIGPSKINKVVGVCKAYTSRVGDGPFPTELFDEVGERIREVGHEYGTTTGRPRRVGWFDSVVMRHSRRVSGITNLSLNCIDVLSGLDTVKICVAYDLDGERIDYYPASLEQLKRCKPIYEELPGWEEDITGCRSLDELPENARNYVRRIGELVGIRISTFSVGPGREQTNILESVWSNI.

GTP contacts are provided by residues Gly12–Lys18 and Gly40–Thr42. Asp13 (proton acceptor) is an active-site residue. Residues Asp13 and Gly40 each coordinate Mg(2+). IMP contacts are provided by residues Asp13–Lys16, Asn38–His41, Thr128, Arg142, Gln223, Thr238, and Arg302. His41 acts as the Proton donor in catalysis. A substrate-binding site is contributed by Thr298–Arg304. Residues Arg304, Cys330–Asp332, and Ser412–Gly414 each bind GTP.

The protein belongs to the adenylosuccinate synthetase family. Homodimer. Mg(2+) serves as cofactor.

The protein localises to the cytoplasm. It catalyses the reaction IMP + L-aspartate + GTP = N(6)-(1,2-dicarboxyethyl)-AMP + GDP + phosphate + 2 H(+). It functions in the pathway purine metabolism; AMP biosynthesis via de novo pathway; AMP from IMP: step 1/2. Its function is as follows. Plays an important role in the de novo pathway of purine nucleotide biosynthesis. Catalyzes the first committed step in the biosynthesis of AMP from IMP. The sequence is that of Adenylosuccinate synthetase from Streptococcus thermophilus (strain CNRZ 1066).